The primary structure comprises 445 residues: F-box protein At5g10340 (445 aa).

The 49-residue stretch at 64 to 112 (SMEELLPHDVIEYHIMVRLDVKTLLKFKSVSKQWMSTIQSPSFQERQLI) folds into the F-box domain.

In Arabidopsis thaliana (Mouse-ear cress), this protein is F-box protein At5g10340.